Reading from the N-terminus, the 278-residue chain is 4-hydroxy-tetrahydrodipicolinate reductase (278 aa).

Residues 16–21 and Glu42 each bind NAD(+); that span reads GAGGRM. Arg43 provides a ligand contact to NADP(+). Residues 106-108 and 130-133 each bind NAD(+); these read GTT and AGNY. Residue His163 is the Proton donor/acceptor of the active site. Position 164 (His164) interacts with (S)-2,3,4,5-tetrahydrodipicolinate. Lys167 (proton donor) is an active-site residue. 173-174 serves as a coordination point for (S)-2,3,4,5-tetrahydrodipicolinate; it reads GT.

Belongs to the DapB family.

The protein localises to the cytoplasm. The catalysed reaction is (S)-2,3,4,5-tetrahydrodipicolinate + NAD(+) + H2O = (2S,4S)-4-hydroxy-2,3,4,5-tetrahydrodipicolinate + NADH + H(+). It carries out the reaction (S)-2,3,4,5-tetrahydrodipicolinate + NADP(+) + H2O = (2S,4S)-4-hydroxy-2,3,4,5-tetrahydrodipicolinate + NADPH + H(+). It participates in amino-acid biosynthesis; L-lysine biosynthesis via DAP pathway; (S)-tetrahydrodipicolinate from L-aspartate: step 4/4. Its function is as follows. Catalyzes the conversion of 4-hydroxy-tetrahydrodipicolinate (HTPA) to tetrahydrodipicolinate. The chain is 4-hydroxy-tetrahydrodipicolinate reductase from Psychrobacter arcticus (strain DSM 17307 / VKM B-2377 / 273-4).